Reading from the N-terminus, the 474-residue chain is Kynureninase 2 (474 aa).

Residues leucine 144, threonine 145, 172–175 (FPSD), aspartate 258, histidine 261, and tyrosine 283 contribute to the pyridoxal 5'-phosphate site. N6-(pyridoxal phosphate)lysine is present on lysine 284. Tryptophan 323 and threonine 351 together coordinate pyridoxal 5'-phosphate.

The protein belongs to the kynureninase family. In terms of assembly, homodimer. The cofactor is pyridoxal 5'-phosphate.

The protein resides in the cytoplasm. It catalyses the reaction L-kynurenine + H2O = anthranilate + L-alanine + H(+). The catalysed reaction is 3-hydroxy-L-kynurenine + H2O = 3-hydroxyanthranilate + L-alanine + H(+). It functions in the pathway amino-acid degradation; L-kynurenine degradation; L-alanine and anthranilate from L-kynurenine: step 1/1. The protein operates within cofactor biosynthesis; NAD(+) biosynthesis; quinolinate from L-kynurenine: step 2/3. In terms of biological role, catalyzes the cleavage of L-kynurenine (L-Kyn) and L-3-hydroxykynurenine (L-3OHKyn) into anthranilic acid (AA) and 3-hydroxyanthranilic acid (3-OHAA), respectively. The polypeptide is Kynureninase 2 (bna5-2) (Emericella nidulans (strain FGSC A4 / ATCC 38163 / CBS 112.46 / NRRL 194 / M139) (Aspergillus nidulans)).